We begin with the raw amino-acid sequence, 206 residues long: Homoserine/homoserine lactone efflux protein (206 aa).

Transmembrane regions (helical) follow at residues 5 to 25, 45 to 65, 68 to 88, 117 to 137, 148 to 168, and 182 to 202; these read WWFA…SGAI, GLQT…GTLF, SVIA…WLGI, FVNL…PQFI, IVLG…YATL, and MKAL…LLAS.

The protein belongs to the Rht family.

Its subcellular location is the cell membrane. In terms of biological role, conducts the efflux of homoserine and homoserine lactone. The protein is Homoserine/homoserine lactone efflux protein (rhtB) of Escherichia coli O157:H7.